The primary structure comprises 342 residues: L-threonine 3-dehydrogenase (342 aa).

Cys-38 is a Zn(2+) binding site. Active-site charge relay system residues include Thr-40 and His-43. Zn(2+) contacts are provided by His-63, Glu-64, Cys-93, Cys-96, Cys-99, and Cys-107. Residues Ile-175, Asp-195, Arg-200, 262–264 (LGI), and 286–287 (IY) each bind NAD(+).

The protein belongs to the zinc-containing alcohol dehydrogenase family. Homotetramer. Requires Zn(2+) as cofactor.

Its subcellular location is the cytoplasm. The catalysed reaction is L-threonine + NAD(+) = (2S)-2-amino-3-oxobutanoate + NADH + H(+). It participates in amino-acid degradation; L-threonine degradation via oxydo-reductase pathway; glycine from L-threonine: step 1/2. Functionally, catalyzes the NAD(+)-dependent oxidation of L-threonine to 2-amino-3-ketobutyrate. This chain is L-threonine 3-dehydrogenase, found in Burkholderia cenocepacia (strain HI2424).